A 221-amino-acid chain; its full sequence is Transcriptional regulator GfcR (221 aa).

Residues 35–59 are disordered; sequence ASWLVERSQPTDNSQSSSANNPTEA. Residues 42 to 57 show a composition bias toward polar residues; that stretch reads SQPTDNSQSSSANNPT.

This sequence belongs to the purine/pyrimidine phosphoribosyltransferase family. GfcR subfamily.

Functionally, DNA-binding transcriptional regulator that functions as a regulator of central sugar catabolic pathways. The chain is Transcriptional regulator GfcR from Haloquadratum walsbyi (strain DSM 16790 / HBSQ001).